Consider the following 1272-residue polypeptide: Fused isobutyryl-CoA mutase (1272 aa).

A B12-binding domain is found at 20-158 (RLRFVTAAAL…ARCAEGARAA (139 aa)). H33 is a binding site for adenosylcob(III)alamin. Residues 163-536 (ESQVGAWAAE…YRHVAEALRK (374 aa)) form a GTPase chaperone MeaI region. The disordered stretch occupies residues 193–240 (GAVARNPSSEASRVAAAGRGDHLDRGVRAASTADTADTANTANTANTA). Residues 221 to 240 (AASTADTADTANTANTANTA) show a composition bias toward low complexity. Residue 334–339 (GAGKSS) coordinates GTP. The Mg(2+) site is built by S338, I363, D364, and D377. R380 contacts GTP. Mg(2+) is bound by residues E429 and T430. 476–479 (NKFD) contributes to the GTP binding site. The tract at residues 537-758 (HGLRSGGGRL…MLDNLPGYFP (222 aa)) is linker. 2 stretches are compositionally biased toward low complexity: residues 614-631 (TVAT…KANA) and 639-663 (ANAS…ATPT). Positions 614–667 (TVATSASPGASASSKANACTSTSSKANASPGANTTANSNASATSGTATPTDALN) are disordered. Residues F766, R801, R907, Y951, S1000, R1035, and K1040 each contribute to the substrate site. GTP-binding residues include E1152 and N1271.

Belongs to the IcmF family. In terms of assembly, homodimer. Adenosylcob(III)alamin serves as cofactor. Mg(2+) is required as a cofactor.

It carries out the reaction 2-methylpropanoyl-CoA = butanoyl-CoA. It catalyses the reaction GTP + H2O = GDP + phosphate + H(+). Functionally, catalyzes the reversible interconversion of isobutyryl-CoA and n-butyryl-CoA, using radical chemistry. Also exhibits GTPase activity, associated with its G-protein domain (MeaI) that functions as a chaperone that assists cofactor delivery and proper holo-enzyme assembly. Does not exhibit methylmalonyl-CoA mutase (MCM) activity. In Paraburkholderia xenovorans (strain LB400), this protein is Fused isobutyryl-CoA mutase.